A 1481-amino-acid chain; its full sequence is ABC-type transporter braE (1481 aa).

6 consecutive transmembrane segments (helical) span residues 27–47 (FTVK…FILA), 86–106 (LILI…SSAL), 130–150 (IFLS…ARTY), 159–179 (EIAF…MLLL), 269–289 (LYVP…SFFC), and 308–328 (PANI…VIAI). Positions 281–549 (LAAIGSFFCQ…LLETLPQMAA (269 aa)) constitute an ABC transmembrane type-1 1 domain. N-linked (GlcNAc...) asparagine glycosylation is present at Asn-367. The next 3 membrane-spanning stretches (helical) occupy residues 389–409 (ELWG…NLLG), 410–430 (VAFI…SFFM), and 491–511 (LMLT…PITF). One can recognise an ABC transporter 1 domain in the interval 594 to 823 (VAIKDGSFGW…QSYIHSLGVK (230 aa)). 627–634 (GPIASGKS) contributes to the ATP binding site. 2 N-linked (GlcNAc...) asparagine glycosylation sites follow: Asn-671 and Asn-813. The next 6 membrane-spanning stretches (helical) occupy residues 887–907 (IAIF…TIWL), 928–948 (AIYA…GVLL), 1001–1021 (SALL…AVIA), 1026–1046 (YLAI…KFYL), 1111–1131 (LHFV…SLAV), and 1144–1164 (LVTL…YTAL). Residues 887-1166 (IAIFTSGLLY…VVIYYTALET (280 aa)) form the ABC transmembrane type-1 2 domain. N-linked (GlcNAc...) asparagine glycans are attached at residues Asn-1207 and Asn-1232. Residues 1224–1477 (LTTNELSSND…PGTRFGELWS (254 aa)) enclose the ABC transporter 2 domain. 1260 to 1267 (GRTGSGKS) lines the ATP pocket. N-linked (GlcNAc...) asparagine glycans are attached at residues Asn-1330 and Asn-1364.

The protein belongs to the ABC transporter superfamily. ABCC family. Conjugate transporter (TC 3.A.1.208) subfamily.

It is found in the membrane. Functionally, ABC-type transporter; part of the gene cluster that mediates the biosynthesis of the brasilane terpene glycosides brasilane D and E. The polypeptide is ABC-type transporter braE (Annulohypoxylon truncatum (Hypoxylon truncatum)).